A 123-amino-acid chain; its full sequence is Small ribosomal subunit protein uS13 (123 aa).

The interval 93 to 123 (RRNLPVRGQKTKTNARTRKGPKRAIGGKKKK) is disordered.

It belongs to the universal ribosomal protein uS13 family. Part of the 30S ribosomal subunit. Forms a loose heterodimer with protein S19. Forms two bridges to the 50S subunit in the 70S ribosome.

Its function is as follows. Located at the top of the head of the 30S subunit, it contacts several helices of the 16S rRNA. In the 70S ribosome it contacts the 23S rRNA (bridge B1a) and protein L5 of the 50S subunit (bridge B1b), connecting the 2 subunits; these bridges are implicated in subunit movement. Contacts the tRNAs in the A and P-sites. This chain is Small ribosomal subunit protein uS13, found in Clostridium botulinum (strain Loch Maree / Type A3).